A 549-amino-acid chain; its full sequence is 65-kDa microtubule-associated protein 9 (549 aa).

Coiled coils occupy residues 36–123 (IEIE…ERKI), 160–199 (SLRK…CSVL), and 459–492 (GNRL…HQGQ). The segment at 474–549 (EEKEQERRRK…SFSTPLSRHG (76 aa)) is disordered. Residues 481 to 490 (RRKRDLKKHQ) are compositionally biased toward basic residues. 2 positions are modified to phosphoserine: Ser501 and Ser546. Over residues 514–549 (VSTNKRFVSSPHTPQTDSPHSAKSNQSFSTPLSRHG) the composition is skewed to polar residues.

Belongs to the MAP65/ASE1 family. As to quaternary structure, forms dimer. Binds to microtubules (MT).

It localises to the nucleus. The protein resides in the cytoplasm. Its subcellular location is the cytoskeleton. The protein localises to the spindle pole. This is 65-kDa microtubule-associated protein 9 (MAP65-9) from Arabidopsis thaliana (Mouse-ear cress).